A 161-amino-acid chain; its full sequence is MKELQDIARLSDRFISVELVDESLFDWNVKLHQVDKDSVLWQDMKETNTEFILLNLTFPDNFPFSPPFMRVLSPRLENGYVLDGGAICMELLTPRGWSSAYTVEAVMRQFAASLVKGQGRICRKAGKSKKSFSRKEAEATFKSLVKTHEKYGWVTPPVSDG.

The UBC core domain occupies 1–154; that stretch reads MKELQDIARL…VKTHEKYGWV (154 aa). The active-site Glycyl thioester intermediate is Cys-88.

The protein belongs to the ubiquitin-conjugating enzyme family. As to quaternary structure, interacts with FBXW7.

It is found in the nucleus. The enzyme catalyses S-ubiquitinyl-[E1 ubiquitin-activating enzyme]-L-cysteine + [E2 ubiquitin-conjugating enzyme]-L-cysteine = [E1 ubiquitin-activating enzyme]-L-cysteine + S-ubiquitinyl-[E2 ubiquitin-conjugating enzyme]-L-cysteine.. It functions in the pathway protein modification; protein ubiquitination. In terms of biological role, probable E2 ubiquitin-protein ligase that catalyzes the covalent attachment of ubiquitin to target proteins. May facilitate the monoubiquitination and degradation of MTOR and CCNE1 through interaction with FBXW7. This chain is Ubiquitin-conjugating enzyme E2Q-like protein 1 (UBE2QL1), found in Homo sapiens (Human).